The primary structure comprises 691 residues: DNA ligase (691 aa).

Residues 41–45 (DAEYD), 90–91 (SL), and Glu-130 contribute to the NAD(+) site. Lys-132 functions as the N6-AMP-lysine intermediate in the catalytic mechanism. Residues Arg-153, Glu-190, Lys-307, and Lys-331 each coordinate NAD(+). Zn(2+) contacts are provided by Cys-425, Cys-428, Cys-443, and Cys-449. The BRCT domain occupies 610–691 (APQGVLAGKT…LHQLLEGNTP (82 aa)).

The protein belongs to the NAD-dependent DNA ligase family. LigA subfamily. It depends on Mg(2+) as a cofactor. Mn(2+) is required as a cofactor.

It carries out the reaction NAD(+) + (deoxyribonucleotide)n-3'-hydroxyl + 5'-phospho-(deoxyribonucleotide)m = (deoxyribonucleotide)n+m + AMP + beta-nicotinamide D-nucleotide.. Its function is as follows. DNA ligase that catalyzes the formation of phosphodiester linkages between 5'-phosphoryl and 3'-hydroxyl groups in double-stranded DNA using NAD as a coenzyme and as the energy source for the reaction. It is essential for DNA replication and repair of damaged DNA. The protein is DNA ligase of Burkholderia ambifaria (strain MC40-6).